We begin with the raw amino-acid sequence, 361 residues long: Chorismate synthase (361 aa).

NADP(+)-binding residues include arginine 48 and arginine 54. Residues 125–127, 238–239, glycine 278, 293–297, and arginine 319 contribute to the FMN site; these read RSS, NA, and KPTSS.

Belongs to the chorismate synthase family. In terms of assembly, homotetramer. It depends on FMNH2 as a cofactor.

It catalyses the reaction 5-O-(1-carboxyvinyl)-3-phosphoshikimate = chorismate + phosphate. The protein operates within metabolic intermediate biosynthesis; chorismate biosynthesis; chorismate from D-erythrose 4-phosphate and phosphoenolpyruvate: step 7/7. Functionally, catalyzes the anti-1,4-elimination of the C-3 phosphate and the C-6 proR hydrogen from 5-enolpyruvylshikimate-3-phosphate (EPSP) to yield chorismate, which is the branch point compound that serves as the starting substrate for the three terminal pathways of aromatic amino acid biosynthesis. This reaction introduces a second double bond into the aromatic ring system. This Vibrio campbellii (strain ATCC BAA-1116) protein is Chorismate synthase.